Consider the following 468-residue polypeptide: Ribulose bisphosphate carboxylase large chain (468 aa).

Residue Lys5 is modified to N6,N6,N6-trimethyllysine. Substrate contacts are provided by Asn114 and Thr164. Lys166 acts as the Proton acceptor in catalysis. Lys168 provides a ligand contact to substrate. Residues Lys192, Asp194, and Glu195 each coordinate Mg(2+). The residue at position 192 (Lys192) is an N6-carboxylysine. His285 acts as the Proton acceptor in catalysis. Residues Arg286, His318, and Ser370 each contribute to the substrate site.

It belongs to the RuBisCO large chain family. Type I subfamily. As to quaternary structure, heterohexadecamer of 8 large chains and 8 small chains; disulfide-linked. The disulfide link is formed within the large subunit homodimers. The cofactor is Mg(2+). In terms of processing, the disulfide bond which can form in the large chain dimeric partners within the hexadecamer appears to be associated with oxidative stress and protein turnover.

It is found in the plastid. It localises to the chloroplast. It catalyses the reaction 2 (2R)-3-phosphoglycerate + 2 H(+) = D-ribulose 1,5-bisphosphate + CO2 + H2O. The catalysed reaction is D-ribulose 1,5-bisphosphate + O2 = 2-phosphoglycolate + (2R)-3-phosphoglycerate + 2 H(+). RuBisCO catalyzes two reactions: the carboxylation of D-ribulose 1,5-bisphosphate, the primary event in carbon dioxide fixation, as well as the oxidative fragmentation of the pentose substrate in the photorespiration process. Both reactions occur simultaneously and in competition at the same active site. This chain is Ribulose bisphosphate carboxylase large chain, found in Tecoma stans (Yellow bells).